Reading from the N-terminus, the 1581-residue chain is Laminin subunit gamma-3 (1581 aa).

Positions 1-28 (MAVSRVLSLLATVASMALVIQETHFAAG) are cleaved as a signal peptide. Positions 40–279 (RAQRCLPEFE…AVSDFSVGGR (240 aa)) constitute a Laminin N-terminal domain. N-linked (GlcNAc...) asparagine glycosylation is present at Asn128. Intrachain disulfides connect Cys280–Cys289, Cys282–Cys299, Cys301–Cys310, Cys313–Cys333, Cys336–Cys345, Cys338–Cys361, Cys364–Cys373, Cys376–Cys389, Cys392–Cys404, Cys394–Cys410, Cys412–Cys421, Cys424–Cys436, Cys439–Cys450, Cys441–Cys457, Cys459–Cys468, and Cys471–Cys486. Laminin EGF-like domains are found at residues 280-335 (CKCN…ECLP), 336-391 (CNCS…PCQP), 392-438 (CDCH…GCRP), and 439-488 (CACN…GCSS). An N-linked (GlcNAc...) asparagine glycan is attached at Asn304. The N-linked (GlcNAc...) asparagine glycan is linked to Asn337. One can recognise a Laminin EGF-like 5; first part domain in the interval 489 to 498 (CFCYGHSKVC). The Laminin IV type A domain occupies 508-684 (HIRSDFRHGA…LAPPASWVET (177 aa)). The N-linked (GlcNAc...) asparagine glycan is linked to Asn640. The 34-residue stretch at 685–718 (CLCPQGYTGQFCEFCALGYKREIPHGGPYANCIP) folds into the Laminin EGF-like 5; second part domain. Disulfide bonds link Cys719–Cys727, Cys721–Cys734, Cys736–Cys745, Cys748–Cys764, Cys767–Cys775, Cys769–Cys786, Cys789–Cys798, Cys801–Cys819, Cys822–Cys836, Cys824–Cys843, Cys846–Cys855, Cys858–Cys875, Cys878–Cys891, Cys880–Cys898, Cys900–Cys909, Cys912–Cys925, Cys928–Cys940, Cys930–Cys947, Cys949–Cys958, Cys961–Cys973, Cys976–Cys988, Cys978–Cys994, Cys996–Cys1005, and Cys1008–Cys1021. Laminin EGF-like domains follow at residues 719 to 766 (CTCN…DCQP), 767 to 821 (CPCP…PCRR), 822 to 877 (CQCS…KCAP), 878 to 927 (CSCD…GCQS), 928 to 975 (CKCH…GCRD), and 976 to 1024 (CRCS…CQEC). Residue Asn849 is glycosylated (N-linked (GlcNAc...) asparagine). Asn991 carries N-linked (GlcNAc...) asparagine glycosylation. The interval 1025–1581 (PTCYALVKEE…LSSLPENCAS (557 aa)) is domain II and I. 2 coiled-coil regions span residues 1029–1046 (ALVKEEAAKLKARLMLME) and 1112–1153 (VHCA…LASL). N-linked (GlcNAc...) asparagine glycans are attached at residues Asn1162 and Asn1196. Residues 1208-1231 (RVASEAQQELEDRYQEVQAAQTAL) are a coiled coil. Asn1320 is a glycosylation site (N-linked (GlcNAc...) asparagine). Residues 1382–1413 (KRKTKQAERMLGNAASLSSSTKKKSKEAELMS) form a disordered region. Coiled-coil stretches lie at residues 1438–1468 (ASQTQATLRRASRLLLTSEAHKQELEEAKQV) and 1510–1575 (AQTL…LSSL). Asn1514 is a glycosylation site (N-linked (GlcNAc...) asparagine).

Laminin is a complex glycoprotein, consisting of three different polypeptide chains (alpha, beta, gamma), which are bound to each other by disulfide bonds into a cross-shaped molecule comprising one long and three short arms with globules at each end. Gamma-3 is a subunit of laminin-12 (laminin-213), laminin-14 (laminin-423) and laminin-15 (laminin-523). Strongly expressed in capillaries and arterioles of kidney as well as in interstitial Leydig cells of testis.

The protein resides in the secreted. It localises to the extracellular space. Its subcellular location is the extracellular matrix. It is found in the basement membrane. In terms of biological role, binding to cells via a high affinity receptor, laminin is thought to mediate the attachment, migration and organization of cells into tissues during embryonic development by interacting with other extracellular matrix components. The polypeptide is Laminin subunit gamma-3 (Lamc3) (Mus musculus (Mouse)).